Reading from the N-terminus, the 166-residue chain is AP-3 complex subunit sigma (166 aa).

This sequence belongs to the adaptor complexes small subunit family. Adaptor protein complex 3 (AP-3) is a heterotetramer composed of two large adaptins (delta-type subunit and beta-type subunit), a medium adaptin (mu-type subunit) and a small adaptin (sigma-type subunit).

The protein localises to the cytoplasm. The protein resides in the golgi apparatus. Its subcellular location is the cytoplasmic vesicle membrane. Its function is as follows. Part of the AP-3 complex, an adaptor-related complex which seems to be clathrin-associated. The complex is associated with the Golgi region as well as more peripheral structures. It facilitates the budding of vesicles from the Golgi membrane and may be directly involved in trafficking to the vacuole. It also function in maintaining the identity of lytic vacuoles and in regulating the transition between storage and lytic vacuoles. The protein is AP-3 complex subunit sigma of Arabidopsis thaliana (Mouse-ear cress).